A 1148-amino-acid polypeptide reads, in one-letter code: Zinc finger CCCH domain-containing protein 18 (1148 aa).

Low complexity predominate over residues 1–13 (MDTPESPTQSPQS). Disordered regions lie at residues 1–315 (MDTP…PMDR), 380–417 (DPFS…LPPP), and 521–1127 (YTET…REEL). 2 stretches are compositionally biased toward basic and acidic residues: residues 53–73 (VPEH…AGRE) and 82–96 (EDYK…DIHQ). Composition is skewed to acidic residues over residues 144-156 (ERGD…EEDE) and 167-176 (ELEEEEDEEE). Residues 190 to 202 (DLKDESSVSRDLD) are compositionally biased toward basic and acidic residues. 2 stretches are compositionally biased toward acidic residues: residues 203 to 214 (EHELDYDEEVPE) and 233 to 245 (EDGE…DEEE). The span at 261–289 (DNRDTPLRKSEDSREGGRRDSFRDKKKEE) shows a compositional bias: basic and acidic residues. Acidic residues predominate over residues 290 to 306 (DDGEIDEGEIDDDDLEE). Residues 388-397 (PPGGAAGGGP) show a composition bias toward gly residues. Basic and acidic residues predominate over residues 530–615 (PDRERERDPR…EKKDEKEKTL (86 aa)). A coiled-coil region spans residues 543–584 (RERERERERDHRERERRQREREREREREREKDSRRRKDEWDR). The span at 622–631 (NMPPRGPMEP) shows a compositional bias: pro residues. The segment covering 632–646 (PTKKDMLSVTKRPDE) has biased composition (basic and acidic residues). The residue at position 666 (S666) is a Phosphoserine. Residues 677 to 740 (SGSSVSLSNS…SRSGSFSSSP (64 aa)) show a composition bias toward low complexity. Composition is skewed to pro residues over residues 783–800 (KVMP…PPKP) and 807–817 (PPNPRPPGRPP). Residues 818-833 (GPREPREPPNMREGRK) show a composition bias toward basic and acidic residues. Low complexity-rich tracts occupy residues 847-875 (VSGS…ASRS), 882-903 (SLSV…SVRS), and 914-925 (ASPVSSASSRSP). 2 stretches are compositionally biased toward basic and acidic residues: residues 933–964 (DRGP…KRVD) and 1012–1029 (QTDR…KERP). A Phosphoserine modification is found at S1056. Low complexity-rich tracts occupy residues 1083–1098 (PAKS…SAAK) and 1107–1119 (GSAS…KPSS). The stretch at 1118-1146 (SSTLSRREELLKQLKAVEDAIARKRAKIP) forms a coiled coil.

The protein resides in the nucleus. This is Zinc finger CCCH domain-containing protein 18 (zc3h18) from Danio rerio (Zebrafish).